Here is a 69-residue protein sequence, read N- to C-terminus: Cytochrome c oxidase subunit 8A, mitochondrial (69 aa).

A mitochondrion-targeting transit peptide spans 1–25; sequence MSVLTPLLLRGLAGSARRLPVPRAQ. The SIFI-degron motif lies at 2–19; that stretch reads SVLTPLLLRGLAGSARRL. The Mitochondrial matrix portion of the chain corresponds to 26–36; that stretch reads IHSKPPREQLG. The helical transmembrane segment at 37–60 threads the bilayer; the sequence is TMDVAIGITSCFLCFLLPAGWVLS. Topologically, residues 61 to 69 are mitochondrial intermembrane; that stretch reads HLESYKKRE.

This sequence belongs to the cytochrome c oxidase VIII family. In terms of assembly, component of the cytochrome c oxidase (complex IV, CIV), a multisubunit enzyme composed of 14 subunits. The complex is composed of a catalytic core of 3 subunits MT-CO1, MT-CO2 and MT-CO3, encoded in the mitochondrial DNA, and 11 supernumerary subunits COX4I, COX5A, COX5B, COX6A, COX6B, COX6C, COX7A, COX7B, COX7C, COX8 and NDUFA4, which are encoded in the nuclear genome. The complex exists as a monomer or a dimer and forms supercomplexes (SCs) in the inner mitochondrial membrane with NADH-ubiquinone oxidoreductase (complex I, CI) and ubiquinol-cytochrome c oxidoreductase (cytochrome b-c1 complex, complex III, CIII), resulting in different assemblies (supercomplex SCI(1)III(2)IV(1) and megacomplex MCI(2)III(2)IV(2)). In response to mitochondrial stress, the precursor protein is ubiquitinated by the SIFI complex in the cytoplasm before mitochondrial import, leading to its degradation. Within the SIFI complex, UBR4 initiates ubiquitin chain that are further elongated or branched by KCMF1.

It localises to the mitochondrion inner membrane. It functions in the pathway energy metabolism; oxidative phosphorylation. Component of the cytochrome c oxidase, the last enzyme in the mitochondrial electron transport chain which drives oxidative phosphorylation. The respiratory chain contains 3 multisubunit complexes succinate dehydrogenase (complex II, CII), ubiquinol-cytochrome c oxidoreductase (cytochrome b-c1 complex, complex III, CIII) and cytochrome c oxidase (complex IV, CIV), that cooperate to transfer electrons derived from NADH and succinate to molecular oxygen, creating an electrochemical gradient over the inner membrane that drives transmembrane transport and the ATP synthase. Cytochrome c oxidase is the component of the respiratory chain that catalyzes the reduction of oxygen to water. Electrons originating from reduced cytochrome c in the intermembrane space (IMS) are transferred via the dinuclear copper A center (CU(A)) of subunit 2 and heme A of subunit 1 to the active site in subunit 1, a binuclear center (BNC) formed by heme A3 and copper B (CU(B)). The BNC reduces molecular oxygen to 2 water molecules using 4 electrons from cytochrome c in the IMS and 4 protons from the mitochondrial matrix. This is Cytochrome c oxidase subunit 8A, mitochondrial (COX8A) from Carlito syrichta (Philippine tarsier).